Here is a 438-residue protein sequence, read N- to C-terminus: Glutamyl-tRNA reductase (438 aa).

Substrate-binding positions include 49–52, serine 109, 114–116, and glutamine 120; these read TCNR and EQQ. Cysteine 50 acts as the Nucleophile in catalysis. Position 191-196 (191-196) interacts with NADP(+); the sequence is GAGAMA.

The protein belongs to the glutamyl-tRNA reductase family. As to quaternary structure, homodimer.

The catalysed reaction is (S)-4-amino-5-oxopentanoate + tRNA(Glu) + NADP(+) = L-glutamyl-tRNA(Glu) + NADPH + H(+). It functions in the pathway porphyrin-containing compound metabolism; protoporphyrin-IX biosynthesis; 5-aminolevulinate from L-glutamyl-tRNA(Glu): step 1/2. Functionally, catalyzes the NADPH-dependent reduction of glutamyl-tRNA(Glu) to glutamate 1-semialdehyde (GSA). The sequence is that of Glutamyl-tRNA reductase from Corynebacterium diphtheriae (strain ATCC 700971 / NCTC 13129 / Biotype gravis).